The sequence spans 196 residues: Dephospho-CoA kinase (196 aa).

Residues Ala-6–Leu-196 enclose the DPCK domain. Gly-14–Thr-19 provides a ligand contact to ATP.

This sequence belongs to the CoaE family.

It localises to the cytoplasm. It catalyses the reaction 3'-dephospho-CoA + ATP = ADP + CoA + H(+). The protein operates within cofactor biosynthesis; coenzyme A biosynthesis; CoA from (R)-pantothenate: step 5/5. Catalyzes the phosphorylation of the 3'-hydroxyl group of dephosphocoenzyme A to form coenzyme A. This is Dephospho-CoA kinase from Helicobacter pylori (strain ATCC 700392 / 26695) (Campylobacter pylori).